We begin with the raw amino-acid sequence, 452 residues long: Pup--protein ligase (452 aa).

Glu9 is a Mg(2+) binding site. Residue Arg53 coordinates ATP. Tyr55 provides a ligand contact to Mg(2+). The active-site Proton acceptor is Asp57. Residue Glu63 participates in Mg(2+) binding. ATP is bound by residues Thr66 and Trp419.

Belongs to the Pup ligase/Pup deamidase family. Pup-conjugating enzyme subfamily.

The catalysed reaction is ATP + [prokaryotic ubiquitin-like protein]-L-glutamate + [protein]-L-lysine = ADP + phosphate + N(6)-([prokaryotic ubiquitin-like protein]-gamma-L-glutamyl)-[protein]-L-lysine.. It participates in protein degradation; proteasomal Pup-dependent pathway. Its pathway is protein modification; protein pupylation. Catalyzes the covalent attachment of the prokaryotic ubiquitin-like protein modifier Pup to the proteasomal substrate proteins, thereby targeting them for proteasomal degradation. This tagging system is termed pupylation. The ligation reaction involves the side-chain carboxylate of the C-terminal glutamate of Pup and the side-chain amino group of a substrate lysine. The sequence is that of Pup--protein ligase from Acidothermus cellulolyticus (strain ATCC 43068 / DSM 8971 / 11B).